Reading from the N-terminus, the 479-residue chain is Aspartyl/glutamyl-tRNA(Asn/Gln) amidotransferase subunit B (479 aa).

Belongs to the GatB/GatE family. GatB subfamily. As to quaternary structure, heterotrimer of A, B and C subunits.

It carries out the reaction L-glutamyl-tRNA(Gln) + L-glutamine + ATP + H2O = L-glutaminyl-tRNA(Gln) + L-glutamate + ADP + phosphate + H(+). It catalyses the reaction L-aspartyl-tRNA(Asn) + L-glutamine + ATP + H2O = L-asparaginyl-tRNA(Asn) + L-glutamate + ADP + phosphate + 2 H(+). Functionally, allows the formation of correctly charged Asn-tRNA(Asn) or Gln-tRNA(Gln) through the transamidation of misacylated Asp-tRNA(Asn) or Glu-tRNA(Gln) in organisms which lack either or both of asparaginyl-tRNA or glutaminyl-tRNA synthetases. The reaction takes place in the presence of glutamine and ATP through an activated phospho-Asp-tRNA(Asn) or phospho-Glu-tRNA(Gln). The chain is Aspartyl/glutamyl-tRNA(Asn/Gln) amidotransferase subunit B from Geotalea uraniireducens (strain Rf4) (Geobacter uraniireducens).